The sequence spans 896 residues: Echinoderm microtubule-associated protein-like 3 (896 aa).

An N-acetylmethionine modification is found at M1. The stretch at L16–L43 forms a coiled coil. The interval P50–Y209 is disordered. Positions T77–E88 are enriched in polar residues. Residues P134 to P145 show a composition bias toward pro residues. The segment covering R154–S163 has biased composition (low complexity). Over residues A174 to S189 the composition is skewed to polar residues. Residues S176, S198, and S204 each carry the phosphoserine modification. 13 WD repeats span residues R234–P286, G295–S344, L350–C392, L398–W434, R448–R487, Y504–P543, Q549–D584, F589–G626, H629–T667, S674–V709, S716–V755, R765–Y823, and A830–V869. Residues G876–V896 form a disordered region. Residues P877–V896 show a composition bias toward low complexity. Phosphothreonine; by CDK1 is present on T881. Residue S883 is modified to Phosphoserine.

This sequence belongs to the WD repeat EMAP family. In terms of assembly, homotrimer; self-association is mediated by the N-terminal coiled coil. Interacts with EML2 but not with EML1. Interacts (phosphorylated at Thr-881) with TUBG1, HAUS1, HAUS2, HAUS3, HAUS4, HAUS5, HAUS6, HAUS7 and HAUS8. Post-translationally, phosphorylation at Thr-881 during mitosis is required for interaction with TUBG1, HAUS1, HAUS2, HAUS3, HAUS4, HAUS5, HAUS6, HAUS7 and HAUS8 and their recruitment to spindle microtubules.

Its subcellular location is the cytoplasm. The protein localises to the cytoskeleton. The protein resides in the nucleus. It is found in the midbody. It localises to the spindle. Regulates mitotic spindle assembly, microtubule (MT)-kinetochore attachment and chromosome separation via recruitment of HAUS augmin-like complex and TUBG1 to the existing MTs and promoting MT-based MT nucleation. Required for proper alignnment of chromosomes during metaphase. The protein is Echinoderm microtubule-associated protein-like 3 (EML3) of Homo sapiens (Human).